The chain runs to 267 residues: Endonuclease NucS (267 aa).

The protein belongs to the NucS endonuclease family.

Its subcellular location is the cytoplasm. In terms of biological role, cleaves both 3' and 5' ssDNA extremities of branched DNA structures. This is Endonuclease NucS from Pyrococcus furiosus (strain ATCC 43587 / DSM 3638 / JCM 8422 / Vc1).